Consider the following 511-residue polypeptide: ATP synthase subunit alpha (511 aa).

Residue 169 to 176 (GDRQTGKT) coordinates ATP.

This sequence belongs to the ATPase alpha/beta chains family. F-type ATPases have 2 components, CF(1) - the catalytic core - and CF(0) - the membrane proton channel. CF(1) has five subunits: alpha(3), beta(3), gamma(1), delta(1), epsilon(1). CF(0) has three main subunits: a(1), b(2) and c(9-12). The alpha and beta chains form an alternating ring which encloses part of the gamma chain. CF(1) is attached to CF(0) by a central stalk formed by the gamma and epsilon chains, while a peripheral stalk is formed by the delta and b chains.

The protein resides in the cell inner membrane. The enzyme catalyses ATP + H2O + 4 H(+)(in) = ADP + phosphate + 5 H(+)(out). Functionally, produces ATP from ADP in the presence of a proton gradient across the membrane. The alpha chain is a regulatory subunit. The protein is ATP synthase subunit alpha of Janthinobacterium sp. (strain Marseille) (Minibacterium massiliensis).